The chain runs to 343 residues: DNA repair and recombination protein RadA (343 aa).

Position 107-114 (107-114 (GEFGAGKS)) interacts with ATP.

The protein belongs to the eukaryotic RecA-like protein family.

In terms of biological role, involved in DNA repair and in homologous recombination. Binds and assemble on single-stranded DNA to form a nucleoprotein filament. Hydrolyzes ATP in a ssDNA-dependent manner and promotes DNA strand exchange between homologous DNA molecules. This Halobacterium salinarum (strain ATCC 29341 / DSM 671 / R1) protein is DNA repair and recombination protein RadA.